Consider the following 160-residue polypeptide: Cytochrome b6-f complex subunit 4 (160 aa).

3 consecutive transmembrane segments (helical) span residues 36–56 (LLYM…GLAV), 95–115 (LLGV…PFIE), and 131–151 (TIFL…TLPI).

This sequence belongs to the cytochrome b family. PetD subfamily. In terms of assembly, the 4 large subunits of the cytochrome b6-f complex are cytochrome b6, subunit IV (17 kDa polypeptide, petD), cytochrome f and the Rieske protein, while the 4 small subunits are petG, petL, petM and petN. The complex functions as a dimer.

Its subcellular location is the plastid. It localises to the chloroplast thylakoid membrane. In terms of biological role, component of the cytochrome b6-f complex, which mediates electron transfer between photosystem II (PSII) and photosystem I (PSI), cyclic electron flow around PSI, and state transitions. The protein is Cytochrome b6-f complex subunit 4 of Staurastrum punctulatum (Green alga).